Consider the following 434-residue polypeptide: UPF0597 protein CLI_2075 (434 aa).

The protein belongs to the UPF0597 family.

This chain is UPF0597 protein CLI_2075, found in Clostridium botulinum (strain Langeland / NCTC 10281 / Type F).